The sequence spans 285 residues: Polyamine aminopropyltransferase (285 aa).

Residues 5–241 (DNWYIEHFQP…GWWSVTMASK (237 aa)) enclose the PABS domain. Q35 is an S-methyl-5'-thioadenosine binding site. 2 residues coordinate spermidine: H66 and D90. Residues D110 and 141–142 (DG) each bind S-methyl-5'-thioadenosine. Catalysis depends on D160, which acts as the Proton acceptor. A spermidine-binding site is contributed by 160–163 (DSTD). P167 is a binding site for S-methyl-5'-thioadenosine.

Belongs to the spermidine/spermine synthase family. In terms of assembly, homodimer or homotetramer.

It localises to the cytoplasm. It carries out the reaction S-adenosyl 3-(methylsulfanyl)propylamine + putrescine = S-methyl-5'-thioadenosine + spermidine + H(+). It participates in amine and polyamine biosynthesis; spermidine biosynthesis; spermidine from putrescine: step 1/1. Functionally, catalyzes the irreversible transfer of a propylamine group from the amino donor S-adenosylmethioninamine (decarboxy-AdoMet) to putrescine (1,4-diaminobutane) to yield spermidine. The chain is Polyamine aminopropyltransferase from Xanthomonas axonopodis pv. citri (strain 306).